Consider the following 129-residue polypeptide: Small ribosomal subunit protein uS12 (129 aa).

A disordered region spans residues 1–25 (MPTYNQLVRFGRKSKTRKTKSPALE). Over residues 10 to 20 (FGRKSKTRKTK) the composition is skewed to basic residues. D89 is subject to 3-methylthioaspartic acid. A disordered region spans residues 109–129 (GRKQGRSRYGTPRKQVAVTKK).

Belongs to the universal ribosomal protein uS12 family. Part of the 30S ribosomal subunit. Contacts proteins S8 and S17. May interact with IF1 in the 30S initiation complex.

Functionally, with S4 and S5 plays an important role in translational accuracy. Interacts with and stabilizes bases of the 16S rRNA that are involved in tRNA selection in the A site and with the mRNA backbone. Located at the interface of the 30S and 50S subunits, it traverses the body of the 30S subunit contacting proteins on the other side and probably holding the rRNA structure together. The combined cluster of proteins S8, S12 and S17 appears to hold together the shoulder and platform of the 30S subunit. The sequence is that of Small ribosomal subunit protein uS12 from Rickettsia peacockii (strain Rustic).